The primary structure comprises 61 residues: Large ribosomal subunit protein bL28 (61 aa).

Belongs to the bacterial ribosomal protein bL28 family.

In Geobacillus stearothermophilus (Bacillus stearothermophilus), this protein is Large ribosomal subunit protein bL28 (rpmB).